Here is a 238-residue protein sequence, read N- to C-terminus: Ribosomal RNA large subunit methyltransferase E (238 aa).

Positions 76, 78, 99, 115, and 139 each coordinate S-adenosyl-L-methionine. The Proton acceptor role is filled by Lys179.

The protein belongs to the class I-like SAM-binding methyltransferase superfamily. RNA methyltransferase RlmE family.

It localises to the cytoplasm. The enzyme catalyses uridine(2552) in 23S rRNA + S-adenosyl-L-methionine = 2'-O-methyluridine(2552) in 23S rRNA + S-adenosyl-L-homocysteine + H(+). Functionally, specifically methylates the uridine in position 2552 of 23S rRNA at the 2'-O position of the ribose in the fully assembled 50S ribosomal subunit. In Rhodopseudomonas palustris (strain BisB18), this protein is Ribosomal RNA large subunit methyltransferase E.